Reading from the N-terminus, the 203-residue chain is Outer-membrane lipoprotein carrier protein (203 aa).

An N-terminal signal peptide occupies residues 1-21 (MKKMAIACALLSSVVASSVWA). The tract at residues 178-203 (QQNGAVDPSKFTFTPPQGVTIDDQRK) is disordered.

This sequence belongs to the LolA family. In terms of assembly, monomer.

It localises to the periplasm. Functionally, participates in the translocation of lipoproteins from the inner membrane to the outer membrane. Only forms a complex with a lipoprotein if the residue after the N-terminal Cys is not an aspartate (The Asp acts as a targeting signal to indicate that the lipoprotein should stay in the inner membrane). The sequence is that of Outer-membrane lipoprotein carrier protein from Salmonella agona (strain SL483).